Here is a 347-residue protein sequence, read N- to C-terminus: UDP-N-acetylenolpyruvoylglucosamine reductase (347 aa).

In terms of domain architecture, FAD-binding PCMH-type spans 17 to 187 (IEQLAAQLVV…TAVGLKFAKA (171 aa)). The active site involves R163. The active-site Proton donor is S232. The active site involves E327.

It belongs to the MurB family. FAD serves as cofactor.

It localises to the cytoplasm. It catalyses the reaction UDP-N-acetyl-alpha-D-muramate + NADP(+) = UDP-N-acetyl-3-O-(1-carboxyvinyl)-alpha-D-glucosamine + NADPH + H(+). It participates in cell wall biogenesis; peptidoglycan biosynthesis. In terms of biological role, cell wall formation. The chain is UDP-N-acetylenolpyruvoylglucosamine reductase from Vibrio cholerae serotype O1 (strain ATCC 39541 / Classical Ogawa 395 / O395).